The primary structure comprises 411 residues: AT-hook motif nuclear-localized protein 14 (411 aa).

4 disordered regions span residues 1–32, 54–164, 289–348, and 366–411; these read MDPN…QRLT, ASTG…LGSV, KDAA…HQAG, and THSR…QIPD. The span at 7–19 shows a compositional bias: basic residues; it reads HHHHQQQQLHHLH. Positions 20-29 are enriched in low complexity; sequence QQQQQQQQQQ. The span at 54–66 shows a compositional bias: polar residues; it reads ASTGNAVPSSNNG. The Bipartite nuclear localization signal motif lies at 105-113; that stretch reads KRKRGRPRK. The segment at residues 105 to 117 is a DNA-binding region (a.T hook); it reads KRKRGRPRKYVTP. Low complexity-rich tracts occupy residues 120–135 and 144–159; these read ALAA…SSSA and VTGG…SKKS. The PPC domain occupies 165-305; the sequence is GKTGQCFTPH…GKGDASNSGS (141 aa). Polar residues predominate over residues 306–315; that stretch reads RLTSPVSSGQ. Positions 374-390 are enriched in gly residues; it reads RGGGNSGHDGRGGGGYD.

It is found in the nucleus. Its function is as follows. Transcription factor that specifically binds AT-rich DNA sequences related to the nuclear matrix attachment regions (MARs). The chain is AT-hook motif nuclear-localized protein 14 from Arabidopsis thaliana (Mouse-ear cress).